The sequence spans 429 residues: Probable imidazolonepropionase (429 aa).

4-imidazolone-5-propanoate is bound by residues Tyr-161 and His-194. Tyr-161 lines the N-formimidoyl-L-glutamate pocket. A Fe(3+)-binding site is contributed by His-262. His-262 contributes to the Zn(2+) binding site. Glu-265 contributes to the 4-imidazolone-5-propanoate binding site. A Fe(3+)-binding site is contributed by Asp-336. Asp-336 contributes to the Zn(2+) binding site. Asn-338 contributes to the N-formimidoyl-L-glutamate binding site.

This sequence belongs to the metallo-dependent hydrolases superfamily. HutI family. It depends on Zn(2+) as a cofactor. Fe(3+) serves as cofactor.

The enzyme catalyses 4-imidazolone-5-propanoate + H2O = N-formimidoyl-L-glutamate. It functions in the pathway amino-acid degradation; L-histidine degradation into L-glutamate; N-formimidoyl-L-glutamate from L-histidine: step 3/3. The chain is Probable imidazolonepropionase (amdhd1) from Nematostella vectensis (Starlet sea anemone).